A 255-amino-acid polypeptide reads, in one-letter code: Proteasome subunit alpha (255 aa).

Positions P190–T201 are enriched in polar residues. Residues P190–N255 are disordered. Basic and acidic residues predominate over residues E202 to G217.

Belongs to the peptidase T1A family. In terms of assembly, the 20S proteasome core is composed of 14 alpha and 14 beta subunits that assemble into four stacked heptameric rings, resulting in a barrel-shaped structure. The two inner rings, each composed of seven catalytic beta subunits, are sandwiched by two outer rings, each composed of seven alpha subunits. The catalytic chamber with the active sites is on the inside of the barrel. Has a gated structure, the ends of the cylinder being occluded by the N-termini of the alpha-subunits. Is capped by the proteasome-associated ATPase, ARC.

It localises to the cytoplasm. It functions in the pathway protein degradation; proteasomal Pup-dependent pathway. Its activity is regulated as follows. The formation of the proteasomal ATPase ARC-20S proteasome complex, likely via the docking of the C-termini of ARC into the intersubunit pockets in the alpha-rings, may trigger opening of the gate for substrate entry. Interconversion between the open-gate and close-gate conformations leads to a dynamic regulation of the 20S proteasome proteolysis activity. Functionally, component of the proteasome core, a large protease complex with broad specificity involved in protein degradation. The sequence is that of Proteasome subunit alpha from Saccharomonospora viridis (strain ATCC 15386 / DSM 43017 / JCM 3036 / CCUG 5913 / NBRC 12207 / NCIMB 9602 / P101) (Thermoactinomyces viridis).